Reading from the N-terminus, the 293-residue chain is AKT-interacting protein homolog A (293 aa).

A compositionally biased stretch (polar residues) spans 1-11 (MNPFWNMSSAS). A disordered region spans residues 1 to 45 (MNPFWNMSSASVRKRSENDEKISTGDQKISPPRSSSAKKQLPPIP). Residues 14–23 (KRSENDEKIS) show a composition bias toward basic and acidic residues. Over residues 24–38 (TGDQKISPPRSSSAK) the composition is skewed to polar residues. One can recognise a UBC core domain in the interval 75–223 (YLEYSLLAEF…VVDSVKLCNS (149 aa)). The segment covering 256–266 (AQKKKSEEQSK) has biased composition (basic and acidic residues). The tract at residues 256-293 (AQKKKSEEQSKGLHVSGLSWVKPGSVLPFSKEENSLQT) is disordered.

It belongs to the ubiquitin-conjugating enzyme family. FTS subfamily.

It is found in the cytoplasm. The protein localises to the cell membrane. May function to promote vesicle trafficking and/or fusion. May also regulate apoptosis. In Xenopus laevis (African clawed frog), this protein is AKT-interacting protein homolog A (aktip-a).